Here is a 365-residue protein sequence, read N- to C-terminus: Magnesium-chelatase subunit ChlI (365 aa).

54 to 61 (GDRGTGKS) lines the ATP pocket.

This sequence belongs to the Mg-chelatase subunits D/I family.

It is found in the plastid. Its subcellular location is the chloroplast. The catalysed reaction is protoporphyrin IX + Mg(2+) + ATP + H2O = Mg-protoporphyrin IX + ADP + phosphate + 3 H(+). It functions in the pathway porphyrin-containing compound metabolism; chlorophyll biosynthesis. Involved in chlorophyll biosynthesis; introduces a magnesium ion into protoporphyrin IX to yield Mg-protoporphyrin IX. This Bigelowiella natans (Pedinomonas minutissima) protein is Magnesium-chelatase subunit ChlI (chlI).